Reading from the N-terminus, the 152-residue chain is Probable ribose-5-phosphate isomerase B (152 aa).

Residue 10 to 11 (DH) coordinates D-ribulose 5-phosphate. The active-site Proton acceptor is cysteine 69. 70-74 (GTGVG) contributes to the D-ribulose 5-phosphate binding site. Histidine 102 acts as the Proton donor in catalysis. Residues aspartate 103, arginine 113, arginine 136, and arginine 140 each contribute to the D-ribulose 5-phosphate site.

It belongs to the LacAB/RpiB family. Homodimer.

The enzyme catalyses aldehydo-D-ribose 5-phosphate = D-ribulose 5-phosphate. It functions in the pathway carbohydrate degradation; pentose phosphate pathway; D-ribose 5-phosphate from D-ribulose 5-phosphate (non-oxidative stage): step 1/1. Catalyzes the interconversion of ribulose-5-P and ribose-5-P. The sequence is that of Probable ribose-5-phosphate isomerase B from Mycoplasma genitalium (strain ATCC 33530 / DSM 19775 / NCTC 10195 / G37) (Mycoplasmoides genitalium).